A 227-amino-acid chain; its full sequence is Small heat shock protein hspG3 (227 aa).

The 197-residue stretch at 31–227 (NKRVDIIPSM…SSNTIKININ (197 aa)) folds into the sHSP domain. The segment at 119-164 (QQQQLENSNKENDEPSIEEFEEDVKSKSELNKTTLNTTENKDEDKT) is disordered.

It belongs to the small heat shock protein (HSP20) family.

The sequence is that of Small heat shock protein hspG3 (hspG3) from Dictyostelium discoideum (Social amoeba).